A 172-amino-acid polypeptide reads, in one-letter code: Myosin regulatory light chain 12B (172 aa).

Over residues M1 to Q16 the composition is skewed to basic residues. Positions M1–S20 are disordered. T19 bears the Phosphothreonine; by MLCK and ZIPK/DAPK3 mark. S20 is modified (phosphoserine; by MLCK and ZIPK/DAPK3). EF-hand domains lie at S29–N64, D98–R133, and F134–D169. Ca(2+) is bound by residues D42, N44, D46, and D53.

Myosin is a hexamer of 2 heavy chains and 4 light chains: interacts with myosin heavy chain MYO19. Phosphorylation increases the actin-activated myosin ATPase activity and thereby regulates the contractile activity. It is required to generate the driving force in the migration of the cells but not necessary for localization of myosin-2 at the leading edge. Phosphorylation is reduced following epigallocatechin-3-O-gallate treatment. Ubiquitously expressed in various hematopoietic cells.

Myosin regulatory subunit that plays an important role in regulation of both smooth muscle and nonmuscle cell contractile activity via its phosphorylation. Phosphorylation triggers actin polymerization in vascular smooth muscle. Implicated in cytokinesis, receptor capping, and cell locomotion. This is Myosin regulatory light chain 12B (MYL12B) from Homo sapiens (Human).